The chain runs to 404 residues: MPLELFDTADQEVRLVETPPAGSDTPVGMYVCGITPYDSTHLGHAATYLAFDLIYRILLDNDHDVHYVQNITDVDDPLFERAARDGVDWRDLGTSQINLFRSDMEALSIIPPKDYIGAIESIDEVIEMVKTLLDEGAAYIVEDAEYPDVYASINATDKFGYESNYDAATMAEFFAERGGDPERPGKKNPMDALLWRAAREGEPSWESPFGAGRPGWHIECSAIATNRLGHSFDIQGGGSDLIFPHHEFSAAHAEAAHGVERMAKHYVHAGMISQDGVKMSKSLGNLEFVSRLTAAGHEPGAIRLGVFANHYRGNRDWNAESLATAEQRLATWREAARAATNREDAIAVVEQLRAHLSADLDTPGALAAVDNWAAGIDTTTDSKEFTEVGNIVVAAIDALLGVQL.

Cys-32 contributes to the Zn(2+) binding site. L-cysteinyl-5'-AMP-binding positions include 32–35 (CGIT), Thr-47, and 70–72 (NIT). The 'HIGH' region motif lies at 34–44 (ITPYDSTHLGH). Residues 176 to 181 (ERGGDP) carry the 'ERGGDP' region motif. Trp-216 contacts L-cysteinyl-5'-AMP. Cys-220 is a Zn(2+) binding site. Residue 238-240 (GSD) coordinates L-cysteinyl-5'-AMP. Residue His-245 coordinates Zn(2+). L-cysteinyl-5'-AMP is bound at residue Ile-272. The short motif at 278-282 (KMSKS) is the 'KMSKS' region element.

It belongs to the class-I aminoacyl-tRNA synthetase family. MshC subfamily. In terms of assembly, monomer. It depends on Zn(2+) as a cofactor.

The enzyme catalyses 1D-myo-inositol 2-amino-2-deoxy-alpha-D-glucopyranoside + L-cysteine + ATP = 1D-myo-inositol 2-(L-cysteinylamino)-2-deoxy-alpha-D-glucopyranoside + AMP + diphosphate + H(+). Functionally, catalyzes the ATP-dependent condensation of GlcN-Ins and L-cysteine to form L-Cys-GlcN-Ins. This is L-cysteine:1D-myo-inositol 2-amino-2-deoxy-alpha-D-glucopyranoside ligase (mshC) from Corynebacterium glutamicum (strain ATCC 13032 / DSM 20300 / JCM 1318 / BCRC 11384 / CCUG 27702 / LMG 3730 / NBRC 12168 / NCIMB 10025 / NRRL B-2784 / 534).